Reading from the N-terminus, the 248-residue chain is Adenosylcobinamide-GDP ribazoletransferase (248 aa).

5 helical membrane passes run 30-50, 54-74, 112-132, 134-154, and 188-208; these read LAES…CYAL, VLSG…LTAV, FGAL…DAVI, AGSF…MVLA, and AVSA…LAAG.

This sequence belongs to the CobS family. Mg(2+) serves as cofactor.

It localises to the cell inner membrane. The enzyme catalyses alpha-ribazole + adenosylcob(III)inamide-GDP = adenosylcob(III)alamin + GMP + H(+). It carries out the reaction alpha-ribazole 5'-phosphate + adenosylcob(III)inamide-GDP = adenosylcob(III)alamin 5'-phosphate + GMP + H(+). It participates in cofactor biosynthesis; adenosylcobalamin biosynthesis; adenosylcobalamin from cob(II)yrinate a,c-diamide: step 7/7. In terms of biological role, joins adenosylcobinamide-GDP and alpha-ribazole to generate adenosylcobalamin (Ado-cobalamin). Also synthesizes adenosylcobalamin 5'-phosphate from adenosylcobinamide-GDP and alpha-ribazole 5'-phosphate. In Syntrophobacter fumaroxidans (strain DSM 10017 / MPOB), this protein is Adenosylcobinamide-GDP ribazoletransferase.